A 247-amino-acid polypeptide reads, in one-letter code: D-alanyl-D-alanine dipeptidase (247 aa).

Residues His-140 and Asp-147 each coordinate Zn(2+). Catalysis depends on Glu-215, which acts as the Proton donor/acceptor. His-218 contributes to the Zn(2+) binding site.

The protein belongs to the peptidase M15D family. The cofactor is Zn(2+).

Its subcellular location is the cytoplasm. It catalyses the reaction D-alanyl-D-alanine + H2O = 2 D-alanine. In terms of biological role, catalyzes hydrolysis of the D-alanyl-D-alanine dipeptide. May have a role in cell-wall turnover. The sequence is that of D-alanyl-D-alanine dipeptidase from Synechocystis sp. (strain ATCC 27184 / PCC 6803 / Kazusa).